We begin with the raw amino-acid sequence, 101 residues long: Gamma-secretase subunit PEN-2 (101 aa).

At 1 to 17 (MNLERVSNEEKLNLCRK) the chain is on the cytoplasmic side. An intramembrane region (helical) is located at residues 18 to 36 (YYLGGFAFLPFLWLVNIFW). At 37-57 (FFKEAFFAPAYTEQSQIKGYV) the chain is on the cytoplasmic side. The helical transmembrane segment at 58–78 (WRSAVGFLFWVIVLTTWITIF) threads the bilayer. The Lumenal portion of the chain corresponds to 79 to 101 (QIYRPRWGALGDYLSFTIPLGTP).

The protein belongs to the PEN-2 family. The functional gamma-secretase complex is composed of at least four polypeptides: a presenilin homodimer (PSEN1 or PSEN2), nicastrin (NCSTN), APH1 (APH1A or APH1B) and PSENEN.

The protein resides in the endoplasmic reticulum membrane. It is found in the golgi apparatus. The protein localises to the golgi stack membrane. It localises to the cell membrane. Its subcellular location is the membrane. Functionally, essential subunit of the gamma-secretase complex, an endoprotease complex that catalyzes the intramembrane cleavage of integral membrane proteins such as Notch receptors and APP (amyloid-beta precursor protein). The gamma-secretase complex plays a role in Notch and Wnt signaling cascades and regulation of downstream processes via its role in processing key regulatory proteins, and by regulating cytosolic CTNNB1 levels. PSENEN modulates both endoproteolysis of presenilin and gamma-secretase activity. The polypeptide is Gamma-secretase subunit PEN-2 (Psenen) (Rattus norvegicus (Rat)).